We begin with the raw amino-acid sequence, 263 residues long: MSEEERKQHVVLVHGACHGAWCWYKVKPQLEASGHRVTAVDLAASGIDMTRSITDISTCEQYSEPLMQLMTSLPDDEKVVLVGHSLGGLSLAMAMDMFPTKISVSVFVTAMMPDTKHSPSFVWDKLRKETSREEWLDTVFTSEKPDFPSEFWIFGPEFMAKNLYQLSPVQDLELAKMLVRANPLIKKDMAERRSFSEEGYGSVTRIFIVCGKDLVSPEDYQRSMISNFPPKEVMEIKDADHMPMFSKPQQLCALLLEIANKYA.

The active-site Acyl-ester intermediate is Ser85. Active-site charge relay system residues include Asp213 and His241.

The protein belongs to the AB hydrolase superfamily. Methylesterase family.

The catalysed reaction is methyl (indol-3-yl)acetate + H2O = (indol-3-yl)acetate + methanol + H(+). It catalyses the reaction methyl (-)-jasmonate + H2O = jasmonate + methanol + H(+). The protein operates within plant hormone biosynthesis. It participates in lipid metabolism; oxylipin biosynthesis. Functionally, methylesterase shown to have carboxylesterase activity, methyl indole-3-acetic acid (MeIAA) esterase activity and methyl jasmonate (MeJA) esterase activity in vitro. The sequence is that of Methylesterase 3 from Arabidopsis thaliana (Mouse-ear cress).